Reading from the N-terminus, the 421-residue chain is BEN domain-containing protein 5 (421 aa).

Lys-133 is modified (N6-acetyllysine). The stretch at 180–243 forms a coiled coil; the sequence is RALYEELLRN…LNRRLQDVLL (64 aa). Lys-258 participates in a covalent cross-link: Glycyl lysine isopeptide (Lys-Gly) (interchain with G-Cter in SUMO2). Residues 302-408 form the BEN domain; that stretch reads GSGIWVDEEK…EKIMDINKSC (107 aa).

Acts as a transcriptional repressor. The sequence is that of BEN domain-containing protein 5 (BEND5) from Homo sapiens (Human).